Consider the following 139-residue polypeptide: MRLTQGCFSFLPDLTDEQIEKQVACAMSRGLAMNVEWTDDPHPRNNYWELWGLPLFDIKDPATVMFELNEARKSCAAGYIRMNAFDASYGTESCVMSFITNRPVSEPGFYLDRTEGVGRQIVYSIKSYSVQANPEGSRY.

The protein belongs to the RuBisCO small chain family. In terms of assembly, heterohexadecamer of 8 large and 8 small subunits.

The protein localises to the plastid. The protein resides in the chloroplast. RuBisCO catalyzes two reactions: the carboxylation of D-ribulose 1,5-bisphosphate, the primary event in carbon dioxide fixation, as well as the oxidative fragmentation of the pentose substrate in the photorespiration process. Both reactions occur simultaneously and in competition at the same active site. Although the small subunit is not catalytic it is essential for maximal activity. The protein is Ribulose bisphosphate carboxylase small subunit of Detonula confervacea (Marine diatom).